A 1478-amino-acid polypeptide reads, in one-letter code: Adhesion G protein-coupled receptor L2 (1478 aa).

A signal peptide spans 1–25 (MVSSGCRMRSLWFIIIISFLPNTEG). Residues 26–855 (FSRAALPFGL…VHELLLTVIT (830 aa)) lie on the Extracellular side of the membrane. The SUEL-type lectin domain maps to 41–130 (SCEGYSIDLR…KYLEVQYECV (90 aa)). An N-linked (GlcNAc...) asparagine glycan is attached at asparagine 99. Positions 139 to 398 (VCPGTLKAIV…ILRYSLEFGP (260 aa)) constitute an Olfactomedin-like domain. Cysteine 140 and cysteine 322 are disulfide-bonded. The N-linked (GlcNAc...) asparagine glycan is linked to asparagine 335. Positions 422–458 (VSTTSTTSQKGPMSTTVAGSQEGSKGTKAPPAVSTTK) are disordered. Residues 430 to 445 (QKGPMSTTVAGSQEGS) are compositionally biased toward polar residues. Asparagine 524, asparagine 633, asparagine 735, asparagine 748, asparagine 791, asparagine 796, and asparagine 817 each carry an N-linked (GlcNAc...) asparagine glycan. Residues 663-841 (TRVSMPTENI…AILMAHREIA (179 aa)) form the GAIN-B domain. 2 disulfides stabilise this stretch: cysteine 792–cysteine 823 and cysteine 811–cysteine 825. The GPS stretch occupies residues 792 to 841 (CSFWNYSERTMMGYWSTQGCKLVDTNKTRTTCACSHLTNFAILMAHREIA). The chain crosses the membrane as a helical span at residues 856 to 876 (WVGIVISLVCLAICIFTFCFF). Residues 877–884 (RGLQSDRN) lie on the Cytoplasmic side of the membrane. Residues 885-905 (TIHKNLCINLFIAEFIFLIGI) form a helical membrane-spanning segment. The Extracellular portion of the chain corresponds to 906–911 (DKTKYM). A helical transmembrane segment spans residues 912–932 (IACPIFAGLLHFFFLAAFAWM). Residues 933-955 (CLEGVQLYLMLVEVFESEYSRKK) lie on the Cytoplasmic side of the membrane. The helical transmembrane segment at 956–976 (YYYVAGYLFPATVVGVSAAID) threads the bilayer. Residues 977–994 (YKSYGTEKACWLHVDNYF) lie on the Extracellular side of the membrane. A helical membrane pass occupies residues 995 to 1015 (IWSFIGPVTFIILLNIIFLVI). Over 1016-1056 (TLCKMVKHSNTLKPDSSRLENINNYRVCDGYYNTDLPGSWV) the chain is Cytoplasmic. The helical transmembrane segment at 1057–1077 (LGAFALLCLLGLTWSFGLLFI) threads the bilayer. At 1078-1081 (NEET) the chain is on the extracellular side. Residues 1082-1102 (IVMAYLFTIFNAFQGVFIFIF) traverse the membrane as a helical segment. At 1103–1478 (HCALQKKVRK…EGQMQLVTSL (376 aa)) the chain is on the cytoplasmic side. The tract at residues 1378 to 1419 (AEDHLQSPNRDSLYTSMPNLRDSPYQESSPDMEEDLSPSRRS) is disordered. Residues 1383–1395 (QSPNRDSLYTSMP) are compositionally biased toward polar residues. 3 positions are modified to phosphoserine: serine 1393, serine 1428, and serine 1449.

It belongs to the G-protein coupled receptor 2 family. Adhesion G-protein coupled receptor (ADGR) subfamily. As to quaternary structure, heterodimer of 2 chains generated by proteolytic processing; the large extracellular N-terminal fragment and the membrane-bound C-terminal fragment predominantly remain associated and non-covalently linked. Post-translationally, autoproteolytically processed at the GPS region of the GAIN-B domain; this cleavage modulates receptor activity. As to expression, ubiquitously expressed.

Its subcellular location is the postsynaptic cell membrane. With respect to regulation, forms a heterodimer of 2 chains generated by proteolytic processing that remain associated through non-covalent interactions mediated by the GAIN-B domain. In the inactivated receptor, the Stachel sequence (also named stalk) is embedded in the GAIN-B domain, where it adopts a beta-strand conformation. On activation, the Stachel moves into the 7 transmembrane region and adopts a twisted hook-shaped configuration that forms contacts within the receptor, leading to coupling of a G-alpha protein, which activates signaling. The cleaved GAIN-B and N-terminal domains can then dissociate from the rest of the receptor. In terms of biological role, orphan adhesion G-protein coupled receptor (aGPCR), which mediates synapse specificity. Ligand binding causes a conformation change that triggers signaling via guanine nucleotide-binding proteins (G proteins) and modulates the activity of downstream effectors. Following G-protein coupled receptor activation, associates with cell adhesion molecules that are expressed at the surface of adjacent cells to direct synapse specificity. Specifically mediates the establishment of perforant-path synapses on CA1-region pyramidal neurons in the hippocampus. Localizes to postsynaptic spines in excitatory synapses in the S.lacunosum-moleculare and interacts with presynaptic cell adhesion molecules, such as teneurins, promoting synapse formation. This chain is Adhesion G protein-coupled receptor L2 (ADGRL2), found in Bos taurus (Bovine).